The sequence spans 226 residues: CRISPR-associated endonuclease Cas3-HD (226 aa).

One can recognise an HD Cas3-type domain in the interval 9–204; sequence GRDCLQTYED…HVLTVCDNWG (196 aa). Residues aspartate 56, histidine 74, histidine 101, and histidine 102 each contribute to the Mg(2+) site.

It belongs to the CRISPR-associated nuclease Cas3-HD family. As to quaternary structure, monomer. Can form a Cascade complex with Csa5, Cas7, Cas5a, Cas3 and Cas8a2. The cofactor is Mg(2+).

Its function is as follows. CRISPR (clustered regularly interspaced short palindromic repeat), is an adaptive immune system that provides protection against mobile genetic elements (viruses, transposable elements and conjugative plasmids). CRISPR clusters contain sequences complementary to antecedent mobile elements and target invading nucleic acids. CRISPR clusters are transcribed and processed into CRISPR RNA (crRNA). Cas3 plus Cascade participate in CRISPR interference, the third stage of CRISPR immunity. Acts as a ssDNA and ssRNA nuclease, probably with both exo- and endonuclease activities. Activity is higher for DNA than RNA. This Thermoproteus tenax (strain ATCC 35583 / DSM 2078 / JCM 9277 / NBRC 100435 / Kra 1) protein is CRISPR-associated endonuclease Cas3-HD (cas3').